The primary structure comprises 553 residues: Heterochromatin protein 1-binding protein 3 (553 aa).

Alanine 2 is modified (N-acetylalanine). Serine 6 carries the phosphoserine modification. Positions 30-131 are disordered; it reads LGEKADDSTM…SKEKEKKVKK (102 aa). Threonine 51 bears the Phosphothreonine mark. A compositionally biased stretch (acidic residues) spans 60–71; it reads GEEEKPEPDGSS. Lysine 64 participates in a covalent cross-link: Glycyl lysine isopeptide (Lys-Gly) (interchain with G-Cter in SUMO2). Threonine 85 carries the post-translational modification Phosphothreonine. Basic and acidic residues predominate over residues 91–127; sequence REAEQPKGEPESGEKEESKSAEETKKEEKDQSKEKEK. Residue lysine 97 forms a Glycyl lysine isopeptide (Lys-Gly) (interchain with G-Cter in SUMO2) linkage. Phosphoserine is present on residues serine 142, serine 155, and serine 156. The H15 1 domain occupies 157–232; sequence PRPKMDAILT…GASGSFVVVQ (76 aa). Residue lysine 190 is modified to N6-acetyllysine. Residues 231-251 form a disordered region; it reads VQKSKTPQKSKNRKKGSAVDP. Over residues 236–246 the composition is skewed to basic residues; sequence TPQKSKNRKKG. At serine 247 the chain carries Phosphoserine. A PxVxL motif motif is present at residues 253-257; that stretch reads PQVKL. 2 H15 domains span residues 253–328 and 335–411; these read PQVK…QLKK and LGGS…QLCF. Lysine 256 is covalently cross-linked (Glycyl lysine isopeptide (Lys-Gly) (interchain with G-Cter in SUMO2)). A disordered region spans residues 422–553; it reads PKKVSDGSED…MKKKSFKTKK (132 aa). Over residues 428 to 449 the composition is skewed to acidic residues; that stretch reads GSEDEDEEEDEEESSEDSEDEE. 3 positions are modified to phosphoserine: serine 441, serine 442, and serine 445. 2 stretches are compositionally biased toward basic residues: residues 488–509 and 542–553; these read GKVRPLPKKAPPKAKTPARKGR and SAMKKKSFKTKK.

In terms of assembly, interacts (via PxVxL motif) with CBX5.

The protein localises to the nucleus. Its subcellular location is the chromosome. Functionally, component of heterochromatin that maintains heterochromatin integrity during G1/S progression and regulates the duration of G1 phase to critically influence cell proliferative capacity. May play a role in hypoxia-induced oncogenesis. The chain is Heterochromatin protein 1-binding protein 3 (Hp1bp3) from Rattus norvegicus (Rat).